Consider the following 140-residue polypeptide: Small ribosomal subunit protein bS6 (140 aa).

Positions 96–140 (VTGQSEMLKAEENRSERRERRDRPEHEGADSADSDDSDNSDNADE) are disordered. The span at 103 to 124 (LKAEENRSERRERRDRPEHEGA) shows a compositional bias: basic and acidic residues. The span at 125–140 (DSADSDDSDNSDNADE) shows a compositional bias: acidic residues.

Belongs to the bacterial ribosomal protein bS6 family.

Its function is as follows. Binds together with bS18 to 16S ribosomal RNA. The sequence is that of Small ribosomal subunit protein bS6 from Pseudomonas fluorescens (strain SBW25).